The chain runs to 488 residues: Histamine H1 receptor (488 aa).

Over 1-38 the chain is Extracellular; sequence MSFLPGMTPVTLSNFSWALEDRMLEGNSTTTPTRQLMP. Residues Asn14 and Asn27 are each glycosylated (N-linked (GlcNAc...) asparagine). A helical transmembrane segment spans residues 39–59; that stretch reads LVVVLSSVSLVTVALNLLVLY. Residues 60-73 lie on the Cytoplasmic side of the membrane; sequence AVRSERKLHTVGNL. A helical transmembrane segment spans residues 74 to 98; sequence YIVSLSVADLIVGAVVMPMSILYLH. The Extracellular segment spans residues 99–106; sequence RSAWILGR. A helical transmembrane segment spans residues 107-132; the sequence is PLCLFWLSMDYVASTASIFSVFILCI. An intrachain disulfide couples Cys109 to Cys189. Histamine-binding residues include Asp116 and Thr121. The segment at 116 to 121 is important for agonist binding; it reads DYVAST. Residues 133 to 153 lie on the Cytoplasmic side of the membrane; it reads DRYRSVQQPLRYLRYRTKTRA. Residues Thr149 and Thr151 each carry the phosphothreonine modification. The chain crosses the membrane as a helical span at residues 154 to 173; the sequence is SATILGAWLLSFLWVIPILG. Residues 174–197 lie on the Extracellular side of the membrane; sequence WHHFMAPTSEPREKKCETDFYDVT. Residues 198–220 traverse the membrane as a helical segment; it reads WFKVMTAIINFYLPTLLMLWFYI. Asn207 contributes to the histamine binding site. Residues 221-417 are Cytoplasmic-facing; it reads RIYKAVRRHC…LNRERKAAKQ (197 aa). Position 239 is a phosphoserine (Ser239). Over residues 259–274 the composition is skewed to basic and acidic residues; sequence RMGKESPWEDPKRCSK. The segment at 259–285 is disordered; the sequence is RMGKESPWEDPKRCSKDASGVHTPMPS. 5 positions are modified to phosphoserine: Ser345, Ser381, Ser383, Ser397, and Ser399. A helical transmembrane segment spans residues 418-441; sequence LGCIMAAFILCWIPYFVFFMVIAF. Residues 425-429 form an important for agonist binding region; the sequence is FILCW. Tyr432 lines the histamine pocket. Cys442 and Cys445 form a disulfide bridge. Over 442 to 447 the chain is Extracellular; that stretch reads CKSCSN. Residues 448 to 470 traverse the membrane as a helical segment; sequence EPVHMFTIWLGYLNSTLNPLIYP. Topologically, residues 471-488 are cytoplasmic; sequence LCNENFRKTFKRILRIPP.

Belongs to the G-protein coupled receptor 1 family. In terms of processing, phosphorylation at sites in the second and third cytoplasmic loops independently contribute to agonist-induced receptor down-regulation.

The protein resides in the cell membrane. Functionally, G-protein-coupled receptor for histamine, a biogenic amine that functions as an immune modulator and a neurotransmitter. Through the H1 receptor, histamine mediates the contraction of smooth muscles and increases capillary permeability due to contraction of terminal venules. Also mediates neurotransmission in the central nervous system and thereby regulates circadian rhythms, emotional and locomotor activities as well as cognitive functions. This is Histamine H1 receptor from Cavia porcellus (Guinea pig).